We begin with the raw amino-acid sequence, 349 residues long: MKKQHIINETFLDAILAKKLGTTYTPPKEINDPDFDEAAKHFIDLLLRADGFKPVKTAVVHPIDKESLLGAVRAAQFNVIKPVLIGPQHKIESVAKVNNVDLEDYQVINVEHSHEAAKKAVELAKKREVAAIMKGSLHTDELMSAVVHKENGLRTERRISHAFLMAVATFPKPFIITDAAINIRPTLEDKRDIVQNAIDLMHMIKEDKQVRVAVLSAVETVTSAIPTTLDAAALSKMADRGQITSAIVDGPLAFDNAISLFAAEAKGISSSVSGNADILVVPDLESGNMLAKQLKYLGQAVMAGIVLGARVPIILTSRADPMDMRVISCVLASFIYNHTKAKLHIQAGK.

It belongs to the phosphate acetyltransferase and butyryltransferase family.

It localises to the cytoplasm. It carries out the reaction acetyl-CoA + phosphate = acetyl phosphate + CoA. It functions in the pathway metabolic intermediate biosynthesis; acetyl-CoA biosynthesis; acetyl-CoA from acetate: step 2/2. The sequence is that of Phosphate acetyltransferase (pta) from Rickettsia felis (strain ATCC VR-1525 / URRWXCal2) (Rickettsia azadi).